Reading from the N-terminus, the 590-residue chain is Suprabasin (590 aa).

Positions 1 to 25 are cleaved as a signal peptide; that stretch reads MHLARLVGSCSLLLLLGALSGWAAS. Disordered regions lie at residues 182–213, 242–266, 297–338, and 545–570; these read GNEA…AHHG, FGQG…GVHH, GQGA…GVHH, and LNGN…SGAS. Low complexity-rich tracts occupy residues 190 to 200, 243 to 254, 297 to 330, and 546 to 559; these read QGVHHAAGQAG, GQGAHHAAGQAG, GQGA…NEAG, and NGNH…HQGG. Over residues 560 to 570 the composition is skewed to polar residues; that stretch reads ATTTPLASGAS.

Detected in thymus, uterus and esophagus.

The protein resides in the secreted. The sequence is that of Suprabasin (SBSN) from Homo sapiens (Human).